The chain runs to 271 residues: Plasmanylethanolamine desaturase 1 (271 aa).

The interval 1–25 (MAGAEDAPGRQPELDEDETAEGRRW) is disordered. Helical transmembrane passes span 48–68 (WCSV…LLLL), 75–95 (PLVI…SGLV), and 166–186 (LYPW…TNQI). Positions 187-191 (HKWSH) match the Histidine box-1 motif. The short motif at 214-218 (HHRIH) is the Histidine box-2 element.

Belongs to the fatty acid desaturase CarF family.

It localises to the endoplasmic reticulum membrane. The enzyme catalyses a 1-(1,2-saturated alkyl)-2-acyl-sn-glycero-3-phosphoethanolamine + 2 Fe(II)-[cytochrome b5] + O2 + 2 H(+) = a 1-O-(1Z-alkenyl)-2-acyl-sn-glycero-3-phosphoethanolamine + 2 Fe(III)-[cytochrome b5] + 2 H2O. It catalyses the reaction a 1-O-hexadecyl-2-acyl-sn-glycero-3-phosphoethanolamine + 2 Fe(II)-[cytochrome b5] + O2 + 2 H(+) = a 1-O-(1Z-hexadecenyl)-2-acyl-sn-glycero-3-phosphoethanolamine + 2 Fe(III)-[cytochrome b5] + 2 H2O. The catalysed reaction is a 1-O-octadecyl-2-acyl-sn-glycero-3-phosphoethanolamine + 2 Fe(II)-[cytochrome b5] + O2 + 2 H(+) = a 1-O-(1Z-octadecenyl)-2-acyl-sn-glycero-3-phosphoethanolamine + 2 Fe(III)-[cytochrome b5] + 2 H2O. It carries out the reaction a 1-O-(9Z-octadecenyl)-2-acyl-sn-glycero-3-phosphoethanolamine + 2 Fe(II)-[cytochrome b5] + O2 + 2 H(+) = a 1-O-(1Z,9Z-octadecadienyl)-2-acyl-sn-glycero-3-phosphoethanolamine + 2 Fe(III)-[cytochrome b5] + 2 H2O. It participates in lipid metabolism; fatty acid metabolism. Functionally, plasmanylethanolamine desaturase involved in plasmalogen biogenesis in the endoplasmic reticulum membrane. Plasmalogens are glycerophospholipids with a hydrocarbon chain linked by a vinyl ether bond at the glycerol sn-1 position, and are involved in antioxidative and signaling mechanisms. The chain is Plasmanylethanolamine desaturase 1 from Mus musculus (Mouse).